Reading from the N-terminus, the 451-residue chain is GABA transporter 1 (451 aa).

A run of 11 helical transmembrane segments spans residues 35-55, 57-77, 115-135, 153-173, 182-202, 222-242, 262-282, 308-328, 356-376, 382-402, and 411-431; these read CGFHLTTSIVAPALLSLPYAF, FLGWAAGISCLVGGAAVTFYS, VGPIQMAVCYGVVIANALLGG, LFEFVIIFGCLLLVLAQFPSF, LSLLLCLLYSASAAAASIYIG, VFGIFNAMAIIATTYGNGIIP, MCYLVVIMTFFTVAITGYWAF, FIFLVNLFTVLQLSAVAVVYL, LVVRSLFVVMATIVAAMLPFF, LLGAFGFIPLDFVLPVVFFNF, and FIFWINTVIAVVFSCLGVIAM.

Belongs to the amino acid/polyamine transporter 2 family. Amino acid/auxin permease (AAAP) (TC 2.A.18.2) subfamily. As to expression, highly expressed in flowers and at lower levels in roots, leaves and stems.

The protein localises to the cell membrane. In terms of biological role, high affinity gamma-aminobutyric acid (GABA) transporter probably involved in GABA uptake into cells. When expressed in a heterologous system (Xenopus oocytes), imports GABA, butylamine, beta- and L-Alanine, 5-aminovaleric acid, 6-aminocaproic acid and 8-aminocaprylic acid, but does not mediate the transport of proline or glycine betaine. In Arabidopsis thaliana (Mouse-ear cress), this protein is GABA transporter 1 (GAT1).